We begin with the raw amino-acid sequence, 2124 residues long: AMB antimetabolite synthetase AmbE (2124 aa).

Residues 456–847 form an adenylation region; that stretch reads LRAALQPQAP…LGRIDEQVKI (392 aa). Residues 950–1147 form a methyltransferase region; the sequence is DVGANIGLFS…DLLRRHGFEV (198 aa). In terms of domain architecture, Carrier 1 spans 1251–1325; it reads APANATEAAL…ELARLLAAPA (75 aa). Serine 1286 is modified (O-(pantetheine 4'-phosphoryl)serine). The segment at 1359-1780 is condensation; the sequence is DAYPMTSLQQ…ALLGDPVQPP (422 aa). Positions 1785 to 1859 constitute a Carrier 2 domain; it reads AEDSVELRRV…EVVRRCHAAD (75 aa). Serine 1819 bears the O-(pantetheine 4'-phosphoryl)serine mark. Positions 1886–2107 are thioesterase; it reads RLIALPPAGG…AAEEVCAILR (222 aa).

Belongs to the NRP synthetase family. It depends on pantetheine 4'-phosphate as a cofactor.

The catalysed reaction is holo-[peptidyl-carrier protein] + L-glutamate + ATP = L-glutamyl-[peptidyl-carrier protein] + AMP + diphosphate. Functionally, involved in the biosynthesis of the antimetabolite L-2-amino-4-methoxy-trans-3-butenoic acid (AMB), a non-proteinogenic amino acid which is toxic for prokaryotes and eukaryotes. Adenylates L-glutamate and loads it onto its first peptidyl carrier domain via a thioester linkage to the phosphopanthetheine moiety. The second peptidyl carrier domain is loaded with a L-alanine activated by AmbB. After formation by AmbB of the L-Glu-L-Ala dipeptide at the first carrier domain of AmbE, the condensation domain of AmbE probably condenses this dipeptide with the L-Ala residue attached at the second carrier domain of AmbE to give the L-Ala-L-Glu-L-Ala tripeptide. The central amino acid, L-Glu, would then undergo a series of modifications to be converted into AMB while the two flanking L-Ala residues remain in place. Finally, the L-Ala-AMB-L-Ala tripeptide is probably released by thioester cleavage via the thioester domain of AmbE. This Pseudomonas aeruginosa (strain ATCC 15692 / DSM 22644 / CIP 104116 / JCM 14847 / LMG 12228 / 1C / PRS 101 / PAO1) protein is AMB antimetabolite synthetase AmbE.